Here is a 146-residue protein sequence, read N- to C-terminus: uncharacterized protein (146 aa).

Positions 7 to 146 (LQINYKTDEL…EGHDILIWNP (140 aa)) constitute an N-acetyltransferase domain.

This is an uncharacterized protein from Staphylococcus epidermidis (strain ATCC 35984 / DSM 28319 / BCRC 17069 / CCUG 31568 / BM 3577 / RP62A).